Here is a 151-residue protein sequence, read N- to C-terminus: Large-conductance mechanosensitive channel (151 aa).

3 helical membrane-spanning segments follow: residues 14-34, 38-58, and 86-106; these read VVDMAVGIIVGGAFGTIVNTL, VLMPPLGLLIGGVDFTNLYLI, and GLFLNSVISFLIMAFAVFLLV.

This sequence belongs to the MscL family. Homopentamer.

Its subcellular location is the cell inner membrane. Channel that opens in response to stretch forces in the membrane lipid bilayer. May participate in the regulation of osmotic pressure changes within the cell. In Pelodictyon phaeoclathratiforme (strain DSM 5477 / BU-1), this protein is Large-conductance mechanosensitive channel.